The primary structure comprises 483 residues: MGLHYLFGFCLALFSFSAIAAGPVSTEVAAGTTTYRVTNTTVRTPPNVTLSPVRDITPYVEKIPNKGLAQAAQGRLIVAQRAASVPVTGFFNVSGAVVKSGAKSFLRSAGRASGIGLGLAALLEAADWVFDEEGEIVKPLPGGGSPVLMPRPVILNEYTVTGSAGQWSISKEYEPDPRSVPGWYSYNGNPVWVSAVEDVGFTWRYWYFADVLMDGQGRPNYLVAYSDSGPNEYWQDVGGYSLDSLPTEPEFVPLTDAELEAGIDQYYEPDPDDWRNLFPYIEPDSFTIETPIPSLDLSPVVSSSTNNQTGKVTVTETTTSVDFEVSDNNSSQPSISVNETTTENVYVDGDLVSSETNTTVTNPPSSGTSTPPSSGSGSDFQLPSFCSWATAVCDWFDWTQEPIDEEPDLSGIISDIDDLERTKDISFGSKSCPAPIALDIEFLDMSVDLSFEWFCELAGIIYFMVMASAYVLAAYITLGVVRG.

Positions 1–20 are cleaved as a signal peptide; the sequence is MGLHYLFGFCLALFSFSAIA. Disordered stretches follow at residues 324–343 and 354–378; these read EVSD…TTTE and SETN…GSGS. Positions 326–343 are enriched in polar residues; that stretch reads SDNNSSQPSISVNETTTE. Residues 460-480 traverse the membrane as a helical segment; sequence IIYFMVMASAYVLAAYITLGV.

This sequence belongs to the inovirus G3P protein family. As to quaternary structure, interacts with G6P; this interaction is required for proper integration of G3P and G6P into the virion. Interacts with G8P. Interacts with the tip of the host pilus.

The protein resides in the virion. Its subcellular location is the host membrane. Plays essential roles both in the penetration of the viral genome into the bacterial host via pilus retraction and in the extrusion process. During the initial step of infection, G3P mediates adsorption of the phage to its primary receptor, the tip of host type IV PAO pilus. Attachment of the phage causes pilus retraction bringing the viral particle into close proximity of the host cell inner membrane. Subsequent interaction with a secondary host entry receptor induces penetration of the viral DNA into the host cytoplasm. In the extrusion process, G3P mediates the release of the membrane-anchored virion from the cell via its C-terminal domain. This is Attachment protein G3P (III) from Pseudomonas phage Pf3 (Bacteriophage Pf3).